We begin with the raw amino-acid sequence, 695 residues long: Probable rhamnogalacturonate lyase C (695 aa).

The N-terminal stretch at 1-21 is a signal peptide; it reads MFLPSRKALAFLACLASHSVA. N-linked (GlcNAc...) asparagine glycosylation is found at N28, N96, N118, N144, N199, N285, N532, and N638.

The protein belongs to the polysaccharide lyase 4 family.

The protein localises to the secreted. The catalysed reaction is Endotype eliminative cleavage of L-alpha-rhamnopyranosyl-(1-&gt;4)-alpha-D-galactopyranosyluronic acid bonds of rhamnogalacturonan I domains in ramified hairy regions of pectin leaving L-rhamnopyranose at the reducing end and 4-deoxy-4,5-unsaturated D-galactopyranosyluronic acid at the non-reducing end.. Its function is as follows. Pectinolytic enzymes consist of four classes of enzymes: pectin lyase, polygalacturonase, pectin methylesterase and rhamnogalacturonase. Degrades the rhamnogalacturonan I (RG-I) backbone of pectin. This Aspergillus oryzae (strain ATCC 42149 / RIB 40) (Yellow koji mold) protein is Probable rhamnogalacturonate lyase C (rglC).